Reading from the N-terminus, the 271-residue chain is ATP synthase subunit a (271 aa).

Helical transmembrane passes span 38-58 (FWTL…LFLV), 100-120 (LIAP…LMDL), 146-166 (DVNI…FYSI), 220-240 (LIFI…LNVP), and 242-262 (AIFH…LTIV).

It belongs to the ATPase A chain family. F-type ATPases have 2 components, CF(1) - the catalytic core - and CF(0) - the membrane proton channel. CF(1) has five subunits: alpha(3), beta(3), gamma(1), delta(1), epsilon(1). CF(0) has three main subunits: a(1), b(2) and c(9-12). The alpha and beta chains form an alternating ring which encloses part of the gamma chain. CF(1) is attached to CF(0) by a central stalk formed by the gamma and epsilon chains, while a peripheral stalk is formed by the delta and b chains.

The protein localises to the cell inner membrane. Its function is as follows. Key component of the proton channel; it plays a direct role in the translocation of protons across the membrane. This Salmonella arizonae (strain ATCC BAA-731 / CDC346-86 / RSK2980) protein is ATP synthase subunit a.